The sequence spans 1627 residues: Adhesin P1 (1627 aa).

The N-terminal stretch at 1–59 (MHQTKKTALSKSTWILILTATASLATGLTVVGHFTSTTTTLKRQQFSYTRPDEVALRHT) is a signal peptide. 4 disordered regions span residues 219 to 238 (LPQQ…AMFG), 252 to 355 (NEKL…PWRP), 898 to 953 (WRND…TTQD), and 1274 to 1362 (SFGT…TGND). Residues 224–234 (TESGQNTSTTG) show a composition bias toward polar residues. Over residues 261–276 (TGSSTTSGSGQSTQRG) the composition is skewed to low complexity. Residues 282–297 (TKVKALKIEVKKKSDS) are compositionally biased toward basic and acidic residues. 3 stretches are compositionally biased toward polar residues: residues 903 to 933 (ASSG…SAGN), 939 to 953 (QDNI…TTQD), and 1274 to 1297 (SFGT…VFGT). The segment covering 1307–1320 (SGGGAGGGSSGSGQ) has biased composition (gly residues). Over residues 1341 to 1352 (STSDGNTSSTNN) the composition is skewed to low complexity. The cytadherence epitope stretch occupies residues 1403-1415 (GPQSVKFKSPDQI). The chain crosses the membrane as a helical span at residues 1527–1547 (AITVPIVVIVLSVTLGLAIGI). The tract at residues 1589–1627 (QAPKRLKQTSAAKPGAPRPPVPPKPGAPKPPVQPPKKPA) is disordered. A compositionally biased stretch (pro residues) spans 1604–1627 (APRPPVPPKPGAPKPPVQPPKKPA).

Belongs to the adhesin P1 family.

The protein resides in the cell membrane. It is found in the cell projection. It localises to the attachment organelle. The protein localises to the cell surface. The protein is the major adhesin mediating the attachment of this mycoplasma to respiratory epithelium. This is Adhesin P1 (mgpA) from Mycoplasma pneumoniae (strain ATCC 29342 / M129 / Subtype 1) (Mycoplasmoides pneumoniae).